The sequence spans 154 residues: CASP-like protein 5B2 (154 aa).

Residues 1–10 (MKKLLGGPGT) lie on the Cytoplasmic side of the membrane. The helical transmembrane segment at 11–31 (VCGLLLRIGQCASAAASIGVM) threads the bilayer. The Extracellular portion of the chain corresponds to 32–42 (VSAKEFSVHTA). Residues 43–63 (FCYLIASMGLQLLWSFGLACL) form a helical membrane-spanning segment. Over 64-77 (DVYALRGKKDLQNP) the chain is Cytoplasmic. A helical transmembrane segment spans residues 78-98 (ILVSLFVVGDWVTAMLSLAAA). At 99 to 129 (CSSAGVVVLYEKDIKYCNTQSQYPCLRYEVA) the chain is on the extracellular side. The helical transmembrane segment at 130-150 (VALSFVTWIQIAVSSHVTFWI) threads the bilayer. The Cytoplasmic segment spans residues 151–154 (LASV).

Belongs to the Casparian strip membrane proteins (CASP) family. In terms of assembly, homodimer and heterodimers. Expressed in the stele of the root.

It is found in the cell membrane. This Arabidopsis thaliana (Mouse-ear cress) protein is CASP-like protein 5B2.